Reading from the N-terminus, the 385-residue chain is WD repeat-containing protein 74 (385 aa).

6 WD repeats span residues 40 to 80 (RREE…FQGQ), 83 to 122 (CPGG…ASSD), 128 to 168 (RVGP…EPLF), 179 to 220 (DLRV…RRPV), 224 to 266 (TYGE…GCLK), and 267 to 306 (GLAG…GLEH). Ser214 carries the post-translational modification Phosphoserine. Lys311 is modified (N6-methyllysine). Residues 320-385 (SGRDNWEDEP…KKKRPGSTSS (66 aa)) form a required for nucleolar and nuclear location region. Positions 323-385 (DNWEDEPQEP…KKKRPGSTSS (63 aa)) are disordered. A compositionally biased stretch (basic residues) spans 372–385 (ARRRKKKRPGSTSS).

In terms of assembly, isoform 1 interacts (through WDR repeats) with NVL; the interaction is independent of RNA or pre-60S ribosome particles. Isoform 2 does not interact with NVL. Interacts with MTREX; the interaction dissociation in a late stage of rRNA synthesis is required for appropriate maturation of pre-60S particles and depends on the ATPase activity of NVL.

The protein localises to the nucleus. Its subcellular location is the nucleolus. Functionally, regulatory protein of the MTREX-exosome complex involved in the synthesis of the 60S ribosomal subunit. Participates in an early cleavage of the pre-rRNA processing pathway in cooperation with NVL. The protein is WD repeat-containing protein 74 (WDR74) of Bos taurus (Bovine).